A 354-amino-acid polypeptide reads, in one-letter code: Major egg antigen (354 aa).

The interval 1 to 21 (MSGGKQHNAVSIPVNREQRSF) is disordered. SHSP domains follow at residues 122 to 233 (SVND…VAVR) and 251 to 354 (AKGV…AITH).

Belongs to the small heat shock protein (HSP20) family.

This chain is Major egg antigen, found in Schistosoma mansoni (Blood fluke).